Consider the following 633-residue polypeptide: DNA mismatch repair protein MutL (633 aa).

The protein belongs to the DNA mismatch repair MutL/HexB family.

This protein is involved in the repair of mismatches in DNA. It is required for dam-dependent methyl-directed DNA mismatch repair. May act as a 'molecular matchmaker', a protein that promotes the formation of a stable complex between two or more DNA-binding proteins in an ATP-dependent manner without itself being part of a final effector complex. This is DNA mismatch repair protein MutL from Pseudomonas putida (strain W619).